The primary structure comprises 102 residues: Hemoglobin subunit beta-Z (102 aa).

A Globin domain is found at 1-102 (FGNLSSAQAI…VANALSHKYH (102 aa)). Heme b contacts are provided by histidine 19 and histidine 48.

This sequence belongs to the globin family. As to quaternary structure, heterotetramer of two alpha chains and two beta chains.

This is an embryonic beta chain. This is Hemoglobin subunit beta-Z (HBBZ) from Mesocricetus auratus (Golden hamster).